We begin with the raw amino-acid sequence, 483 residues long: GTPase Der (483 aa).

2 consecutive EngA-type G domains span residues 3–167 (FTLA…GEER) and 212–387 (LRIA…EIWN). Residues 9–16 (GRPNVGKS), 56–60 (DTAGL), 119–122 (NKAE), 218–225 (GRPNAGKS), 265–269 (DTAGM), and 330–333 (NKWD) each bind GTP. One can recognise a KH-like domain in the interval 388-472 (RRISTGRLNR…PIRLSLRTSD (85 aa)).

This sequence belongs to the TRAFAC class TrmE-Era-EngA-EngB-Septin-like GTPase superfamily. EngA (Der) GTPase family. Associates with the 50S ribosomal subunit.

GTPase that plays an essential role in the late steps of ribosome biogenesis. In Brucella melitensis biotype 2 (strain ATCC 23457), this protein is GTPase Der.